Reading from the N-terminus, the 132-residue chain is Small ribosomal subunit protein uS8 (132 aa).

It belongs to the universal ribosomal protein uS8 family. Part of the 30S ribosomal subunit. Contacts proteins S5 and S12.

Functionally, one of the primary rRNA binding proteins, it binds directly to 16S rRNA central domain where it helps coordinate assembly of the platform of the 30S subunit. The sequence is that of Small ribosomal subunit protein uS8 from Mycolicibacterium smegmatis (strain ATCC 700084 / mc(2)155) (Mycobacterium smegmatis).